The sequence spans 149 residues: UPF0179 protein MM_0589 (149 aa).

The protein belongs to the UPF0179 family.

The polypeptide is UPF0179 protein MM_0589 (Methanosarcina mazei (strain ATCC BAA-159 / DSM 3647 / Goe1 / Go1 / JCM 11833 / OCM 88) (Methanosarcina frisia)).